The sequence spans 179 residues: Shikimate kinase (179 aa).

14-19 provides a ligand contact to ATP; the sequence is GAGKTT. Thr-18 contacts Mg(2+). Substrate contacts are provided by Asp-36, Arg-60, and Gly-82. Arg-120 serves as a coordination point for ATP. Arg-139 provides a ligand contact to substrate.

The protein belongs to the shikimate kinase family. In terms of assembly, monomer. The cofactor is Mg(2+).

It is found in the cytoplasm. It carries out the reaction shikimate + ATP = 3-phosphoshikimate + ADP + H(+). Its pathway is metabolic intermediate biosynthesis; chorismate biosynthesis; chorismate from D-erythrose 4-phosphate and phosphoenolpyruvate: step 5/7. Catalyzes the specific phosphorylation of the 3-hydroxyl group of shikimic acid using ATP as a cosubstrate. This Methylococcus capsulatus (strain ATCC 33009 / NCIMB 11132 / Bath) protein is Shikimate kinase.